The primary structure comprises 244 residues: Extracellular superoxide dismutase [Cu-Zn] (244 aa).

The signal sequence occupies residues 1 to 18; it reads MLALVCSCLLLAALPADT. 2 cysteine pairs are disulfide-bonded: C67-C212 and C129-C211. N-linked (GlcNAc...) asparagine glycosylation occurs at N111. Cu cation contacts are provided by H118, H120, and H135. Positions 135, 143, 146, and 149 each coordinate Zn(2+). A Cu cation-binding site is contributed by H185. The tract at residues 221 to 244 is disordered; that stretch reads PWARQAQEHAERKKRRRESECKAA. Basic and acidic residues predominate over residues 226-244; it reads AQEHAERKKRRRESECKAA.

Belongs to the Cu-Zn superoxide dismutase family. As to quaternary structure, homotetramer. Directly interacts with ATP7A; this interaction is copper-dependent and is required for SOD3 activity. Cu cation is required as a cofactor. The cofactor is Zn(2+).

It localises to the secreted. The protein resides in the extracellular space. The protein localises to the golgi apparatus. Its subcellular location is the trans-Golgi network. The catalysed reaction is 2 superoxide + 2 H(+) = H2O2 + O2. Functionally, protect the extracellular space from toxic effect of reactive oxygen intermediates by converting superoxide radicals into hydrogen peroxide and oxygen. This Oryctolagus cuniculus (Rabbit) protein is Extracellular superoxide dismutase [Cu-Zn] (SOD3).